Consider the following 236-residue polypeptide: MKQMDANEIISFIQNSTKSTPVKVYIKGDLEGIEFGEQAKTFITGNTGVVFGEWSDIQEALETNKDKIEDVVVENDRRNSAIPMLDLKNIKARIEPGAIIRDQVEIGDNAVIMMGASINIGSVIGEGTMIDMNVVLGGRATVGKNCHIGAGSVLAGVIEPPSAKPVVVEDDVVIGANAVVLEGVTIGKGAVVAAGAIVVNDVEPYTVVAGTPAKKIKDIDEKTKGKTEIKQELRQL.

It belongs to the transferase hexapeptide repeat family. DapH subfamily.

The catalysed reaction is (S)-2,3,4,5-tetrahydrodipicolinate + acetyl-CoA + H2O = L-2-acetamido-6-oxoheptanedioate + CoA. It participates in amino-acid biosynthesis; L-lysine biosynthesis via DAP pathway; LL-2,6-diaminopimelate from (S)-tetrahydrodipicolinate (acetylase route): step 1/3. Catalyzes the transfer of an acetyl group from acetyl-CoA to tetrahydrodipicolinate. This is 2,3,4,5-tetrahydropyridine-2,6-dicarboxylate N-acetyltransferase from Bacillus pumilus (strain SAFR-032).